A 173-amino-acid polypeptide reads, in one-letter code: Glutamyl-tRNA(Gln) amidotransferase subunit C-1, mitochondrial (173 aa).

The transit peptide at 1–23 (MIRIPFRLRPPPGRTLHSLVRTF) directs the protein to the mitochondrion. The segment at 51–70 (PSKVPQRPHKSTTTVGQSTP) is disordered. The segment covering 61-70 (STTTVGQSTP) has biased composition (polar residues).

Belongs to the GatC family. As to quaternary structure, subunit of the heterotrimeric GatCAB amidotransferase (AdT) complex, composed of A, B and C subunits.

It is found in the mitochondrion. The catalysed reaction is L-glutamyl-tRNA(Gln) + L-glutamine + ATP + H2O = L-glutaminyl-tRNA(Gln) + L-glutamate + ADP + phosphate + H(+). In terms of biological role, allows the formation of correctly charged Gln-tRNA(Gln) through the transamidation of misacylated Glu-tRNA(Gln) in the mitochondria. The reaction takes place in the presence of glutamine and ATP through an activated gamma-phospho-Glu-tRNA(Gln). The polypeptide is Glutamyl-tRNA(Gln) amidotransferase subunit C-1, mitochondrial (Culex quinquefasciatus (Southern house mosquito)).